The sequence spans 277 residues: Large ribosomal subunit protein uL2 (277 aa).

The segment at 220–277 is disordered; sequence VRGSVMNPNDHPHGGGEGKAPIGRPSPMSPWGKKTLGKKTRSSKARSEKLIIRHRKSR. Basic residues predominate over residues 254–263; sequence TLGKKTRSSK.

Belongs to the universal ribosomal protein uL2 family. In terms of assembly, part of the 50S ribosomal subunit. Forms a bridge to the 30S subunit in the 70S ribosome.

Functionally, one of the primary rRNA binding proteins. Required for association of the 30S and 50S subunits to form the 70S ribosome, for tRNA binding and peptide bond formation. It has been suggested to have peptidyltransferase activity; this is somewhat controversial. Makes several contacts with the 16S rRNA in the 70S ribosome. This Latilactobacillus sakei subsp. sakei (strain 23K) (Lactobacillus sakei subsp. sakei) protein is Large ribosomal subunit protein uL2.